The chain runs to 88 residues: Transmembrane protein 069R (88 aa).

2 helical membrane-spanning segments follow: residues alanine 30–alanine 50 and valine 67–phenylalanine 87.

Its subcellular location is the host membrane. This chain is Transmembrane protein 069R, found in Frog virus 3 (isolate Goorha) (FV-3).